The sequence spans 105 residues: MAPKAFFVCLPWVLPRHALIVRQAGNPYHFLAYTNPRAPGKLQDSHCPVFFMGIIIITIITVTLAIIIINIIFLTLFDDGMCFYCSLLTFSFVSFNFDHFDHFDL.

The Extracellular segment spans residues 1–48 (MAPKAFFVCLPWVLPRHALIVRQAGNPYHFLAYTNPRAPGKLQDSHCP). A helical membrane pass occupies residues 49-69 (VFFMGIIIITIITVTLAIIII). A topological domain (cytoplasmic) is located at residue Asn70. The chain crosses the membrane as a helical span at residues 71-91 (IIFLTLFDDGMCFYCSLLTFS). Topologically, residues 92–105 (FVSFNFDHFDHFDL) are extracellular.

Its subcellular location is the membrane. This is an uncharacterized protein from Saccharomyces cerevisiae (strain ATCC 204508 / S288c) (Baker's yeast).